Consider the following 948-residue polypeptide: Putative JmjC domain-containing histone demethylation protein 1 (948 aa).

In terms of domain architecture, JmjC spans 243–402; sequence VSTTKLAYYV…PQLSIYNLEL (160 aa). T294 contacts substrate. Fe cation contacts are provided by H297 and E299. K314 contributes to the substrate binding site.

Belongs to the JHDM1 histone demethylase family. Requires Fe(2+) as cofactor.

The protein resides in the nucleus. The catalysed reaction is N(6),N(6)-dimethyl-L-lysyl(36)-[histone H3] + 2 2-oxoglutarate + 2 O2 = L-lysyl(36)-[histone H3] + 2 formaldehyde + 2 succinate + 2 CO2. May be a histone demethylase that specifically demethylates 'Lys-36' of histone H3, thereby playing a central role in histone code. Represses transcriptional silencing by negatively affecting heterochromatin stability. This chain is Putative JmjC domain-containing histone demethylation protein 1 (jhd1), found in Schizosaccharomyces pombe (strain 972 / ATCC 24843) (Fission yeast).